The sequence spans 417 residues: MRALAYFGKGNIRFTNHLKEPHIVAPDELVIDIEWCGICGTDLHEYTDGPIFFPEDGHTHEISHNPLPQAMGHEMAGTVLEVGPGVKNLKVGDKVVVEPTGTCRDRYRWPLSPNVDKEWCAACKKGYYNICSYLGLCGAGVQSGGFAERVVMNESHCYKVPDFVPLDVAALIQPLAVCWHAIRVCEFKAGSTALIIGAGPIGLGTILALNAAGCKDIVVSEPAKVRRELAEKMGARVYDPTAHAAKESIDYLRSIADGGDGFDYTFDCSGLEVTLNAAIQCLTFRGTAVNLAMWGHHKIQFSPMDITLHERKYTGSMCYTHHDFEAVIEALEEGRIDIDRARHMITGRVNIEDGLDGAIMKLINEKESTIKIILTPNNHGELNREADNEKKEISELSSRKDQERLRESINEAKLRHT.

Cys-39 is a Zn(2+) binding site. At Ser-63 the chain carries Phosphoserine. Zn(2+) is bound by residues His-64, Cys-120, Cys-123, Cys-131, and Gln-173. The interval 380 to 417 (GELNREADNEKKEISELSSRKDQERLRESINEAKLRHT) is disordered. The segment covering 381-417 (ELNREADNEKKEISELSSRKDQERLRESINEAKLRHT) has biased composition (basic and acidic residues).

This sequence belongs to the zinc-containing alcohol dehydrogenase family. Zn(2+) serves as cofactor.

Its subcellular location is the cytoplasm. The protein localises to the nucleus. The catalysed reaction is (R)-acetoin + NAD(+) = diacetyl + NADH + H(+). Functionally, catalyzes the irreversible reduction of 2,3-butanediol to (S)-acetoin in the presence of NADH. In Saccharomyces cerevisiae (strain ATCC 204508 / S288c) (Baker's yeast), this protein is Probable diacetyl reductase [(R)-acetoin forming] 2 (BDH2).